Here is a 329-residue protein sequence, read N- to C-terminus: Two pore potassium channel protein sup-9 (329 aa).

Topologically, residues methionine 1–threonine 8 are cytoplasmic. A helical membrane pass occupies residues leucine 9–leucine 29. Asparagine 53 carries an N-linked (GlcNAc...) asparagine glycan. The segment at residues phenylalanine 80–threonine 100 is an intramembrane region (pore-forming). The Selectivity filter motif lies at threonine 93–histidine 98. Residues valine 108–isoleucine 128 traverse the membrane as a helical segment. Residues glycine 129–aspartate 157 are Cytoplasmic-facing. The chain crosses the membrane as a helical span at residues leucine 158–serine 178. The N-linked (GlcNAc...) asparagine glycan is linked to asparagine 182. The pore-forming intramembrane region spans phenylalanine 186–alanine 206. The Selectivity filter motif lies at threonine 198–aspartate 203. A helical membrane pass occupies residues valine 220 to leucine 240. Topologically, residues leucine 241–tyrosine 329 are cytoplasmic. Positions serine 289–tyrosine 296 are may be important for regulation by and/or interaction with sup-10. The interval histidine 307–tyrosine 329 is disordered.

It belongs to the two pore domain potassium channel (TC 1.A.1.8) family. As to quaternary structure, may form a complex with the regulatory subunits unc-93 and sup-10. Low levels along surface of body-wall muscle cells, in vulval and intestinal muscles and, more weakly, in anal depressor and sphincter muscles. Also expressed in a subset of head neurons.

It is found in the membrane. In terms of biological role, potassium channel involved in coordination of muscle contraction. Activity is regulated by sup-18. This chain is Two pore potassium channel protein sup-9, found in Caenorhabditis elegans.